The sequence spans 909 residues: E3 ubiquitin-protein ligase HACE1 (909 aa).

Positions 1 to 21 are N-terminal helix important for homodimerization; it reads MERAMEQLNRLTRSLRRARTV. 7 ANK repeats span residues 23 to 55, 64 to 93, 97 to 126, 130 to 159, 163 to 192, 196 to 226, and 228 to 253; these read LPEDNETAVYTLMPMVMADQHRSVSELLSNSKF, VKRSLLHIAANCGSVECLVLLLKKGANPNY, SGCTPLHLAARNGQKKCMSKLLEYSADVNI, EGLTAIHWLAVNGRTELLHDLVQHVTDVDV, MGQTALHVACQNGHKTTVQCLLDSGADINR, SGATPLYFACSHGQRDTAQILLLRGAKYLPD, and NGVTPLDLCVQGGYGQTCEVLIQYHP. The interval 398–433 is disordered; the sequence is QDQEAPSLSAFEPPGPGSYESLPPGPGDSKPEVLAG. An HECT domain is found at 574–909; sequence NCAKLKQGIA…HCGSYGYTMA (336 aa). Cysteine 876 functions as the Glycyl thioester intermediate in the catalytic mechanism.

Homodimer. The homodimer is autoinhibited and stabilized by its N-terminal helix. Interacts with RAB1 (RAB1A, RAB1B or RAB1C), RAB4 (RAB4A or RAB4B) and RAB11 (RAB11A or RAB11B); in a GTP-dependent manner. Interacts with the 26S proteasomal complex through the 20S core proteasomal subunit. Interacts with RARB. In terms of processing, autoubiquitinated.

The protein resides in the golgi apparatus. It is found in the golgi stack membrane. It localises to the cytoplasm. The protein localises to the endoplasmic reticulum. The catalysed reaction is S-ubiquitinyl-[E2 ubiquitin-conjugating enzyme]-L-cysteine + [acceptor protein]-L-lysine = [E2 ubiquitin-conjugating enzyme]-L-cysteine + N(6)-ubiquitinyl-[acceptor protein]-L-lysine.. Its pathway is protein modification; protein ubiquitination. With respect to regulation, sterically autoinhibited in its dimeric state. Its function is as follows. E3 ubiquitin-protein ligase involved in Golgi membrane fusion and regulation of small GTPases. Acts as a regulator of Golgi membrane dynamics during the cell cycle: recruited to Golgi membrane by Rab proteins and regulates postmitotic Golgi membrane fusion. Acts by mediating ubiquitination during mitotic Golgi disassembly, ubiquitination serving as a signal for Golgi reassembly later, after cell division. Specifically binds GTP-bound RAC1, mediating ubiquitination and subsequent degradation of active RAC1, thereby playing a role in host defense against pathogens. May also act as a transcription regulator via its interaction with RARB. The sequence is that of E3 ubiquitin-protein ligase HACE1 (Hace1) from Mus musculus (Mouse).